The chain runs to 276 residues: Glutathione S-transferase-like protein ustS (276 aa).

The GST N-terminal domain occupies 16–109 (STLPGTSKSW…HLDETYPDPP (94 aa)).

The protein belongs to the GST superfamily.

It functions in the pathway mycotoxin biosynthesis. In terms of biological role, glutathione S-transferase-like protein; part of the gene cluster that mediates the biosynthesis of the secondary metabolite ustiloxin B, an antimitotic tetrapeptide. First, ustA is processed by the subtilisin-like endoprotease Kex2 that is outside the ustiloxin B gene cluster, at the C-terminal side of Arg-Lys, after transfer to Golgi apparatus through the endoplasmic reticulum (ER). Cleavage by KEX2 generates 16 peptides YAIG-I to YAIG-XVI. To process the precursor peptide further, at least two peptidases are necessary to cleave the N-terminal and C-terminal sides of the Tyr-Ala-Ile-Gly core peptide which serves as backbone for the synthesis of ustiloxin B, through cyclization and modification of the tyrosine with a non-protein coding amino acid, norvaline. One of the two peptidases must be the serine peptidase ustP; and the other pepdidase is probably ustH. Macrocyclization of the core peptide derived from ustA requires the tyrosinase ustQ, as well as the homologous oxidases ustYa and ustYb, and leads to the production of the first cyclization product N-desmethylustiloxin F. For the formation of N-desmethylustiloxin F, three oxidation steps are required, hydroxylation at the benzylic position, hydroxylation at either the aromatic ring of Tyr or beta-position of Ile, and oxidative cyclization. UstQ may catalyze the oxidation of a phenol moiety, whereas the ustYa and ustYb are most likely responsible for the remaining two-step oxidations. N-desmethylustiloxin F is then methylated by ustM to yield ustiloxin F which in turn substrate of the cytochrome P450 monooxygenase ustC which catalyzes the formation of S-deoxyustiloxin H. The flavoprotein monooxygenases ustF1 and ustF2 then participate in the modification of the side chain of S-deoxyustiloxin H, leading to the synthesis of an oxime intermediate, via ustiloxin H. Finally, carboxylative dehydration performed by the cysteine desulfurase-like protein ustD yields ustiloxin B. The sequence is that of Glutathione S-transferase-like protein ustS from Aspergillus flavus (strain ATCC 200026 / FGSC A1120 / IAM 13836 / NRRL 3357 / JCM 12722 / SRRC 167).